The primary structure comprises 200 residues: Pyrrolidone-carboxylate peptidase (200 aa).

Catalysis depends on residues Glu-78, Cys-141, and His-165.

Belongs to the peptidase C15 family. As to quaternary structure, homotetramer.

The protein localises to the cytoplasm. It catalyses the reaction Release of an N-terminal pyroglutamyl group from a polypeptide, the second amino acid generally not being Pro.. Functionally, removes 5-oxoproline from various penultimate amino acid residues except L-proline. The protein is Pyrrolidone-carboxylate peptidase of Lactobacillus acidophilus (strain ATCC 700396 / NCK56 / N2 / NCFM).